Here is a 60-residue protein sequence, read N- to C-terminus: Large ribosomal subunit protein bL32 (60 aa).

Belongs to the bacterial ribosomal protein bL32 family.

In Pediococcus pentosaceus (strain ATCC 25745 / CCUG 21536 / LMG 10740 / 183-1w), this protein is Large ribosomal subunit protein bL32.